A 399-amino-acid chain; its full sequence is S-adenosylmethionine synthase (399 aa).

An ATP-binding site is contributed by H15. D17 contacts Mg(2+). E43 serves as a coordination point for K(+). Residues E56 and Q99 each coordinate L-methionine. Positions 99–109 are flexible loop; that stretch reads QSPDIADGVDH. ATP-binding positions include 175-177, 242-243, D251, 257-258, A274, and K278; these read DAK, RF, and RK. Position 251 (D251) interacts with L-methionine. K282 contacts L-methionine.

This sequence belongs to the AdoMet synthase family. Homotetramer; dimer of dimers. The cofactor is Mg(2+). It depends on K(+) as a cofactor.

Its subcellular location is the cytoplasm. It carries out the reaction L-methionine + ATP + H2O = S-adenosyl-L-methionine + phosphate + diphosphate. Its pathway is amino-acid biosynthesis; S-adenosyl-L-methionine biosynthesis; S-adenosyl-L-methionine from L-methionine: step 1/1. Its function is as follows. Catalyzes the formation of S-adenosylmethionine (AdoMet) from methionine and ATP. The overall synthetic reaction is composed of two sequential steps, AdoMet formation and the subsequent tripolyphosphate hydrolysis which occurs prior to release of AdoMet from the enzyme. The sequence is that of S-adenosylmethionine synthase from Lactobacillus acidophilus (strain ATCC 700396 / NCK56 / N2 / NCFM).